Consider the following 578-residue polypeptide: Glutathione hydrolase 2 (578 aa).

The signal sequence occupies residues 1 to 26 (MNSFMSLVRTATIALLLIAFLQNANA). Residue asparagine 94 is glycosylated (N-linked (GlcNAc...) asparagine). Arginine 103 provides a ligand contact to L-glutamate. Residues asparagine 176 and asparagine 227 are each glycosylated (N-linked (GlcNAc...) asparagine). Catalysis depends on threonine 374, which acts as the Nucleophile. L-glutamate is bound by residues threonine 392, asparagine 394, glutamate 413, aspartate 416, 446–447 (SS), and 467–468 (GG). N-linked (GlcNAc...) asparagine glycosylation occurs at asparagine 511.

This sequence belongs to the gamma-glutamyltransferase family. Expressed in roots, immature trichomes and pollen. In developing siliques, specifically expressed in the embryo, endosperm, outer integument and a small portion of the funiculus.

It is found in the secreted. The protein localises to the extracellular space. The protein resides in the apoplast. It catalyses the reaction an N-terminal (5-L-glutamyl)-[peptide] + an alpha-amino acid = 5-L-glutamyl amino acid + an N-terminal L-alpha-aminoacyl-[peptide]. The enzyme catalyses glutathione + H2O = L-cysteinylglycine + L-glutamate. The catalysed reaction is an S-substituted glutathione + H2O = an S-substituted L-cysteinylglycine + L-glutamate. It participates in sulfur metabolism; glutathione metabolism. May be required for glutathione transport into developing seeds. The protein is Glutathione hydrolase 2 (GGT2) of Arabidopsis thaliana (Mouse-ear cress).